The following is a 355-amino-acid chain: Uroporphyrinogen decarboxylase (355 aa).

Substrate is bound by residues 27-31, aspartate 77, tyrosine 154, threonine 209, and histidine 327; that span reads RQAGR.

The protein belongs to the uroporphyrinogen decarboxylase family. Homodimer.

The protein resides in the cytoplasm. It carries out the reaction uroporphyrinogen III + 4 H(+) = coproporphyrinogen III + 4 CO2. The protein operates within porphyrin-containing compound metabolism; protoporphyrin-IX biosynthesis; coproporphyrinogen-III from 5-aminolevulinate: step 4/4. Its function is as follows. Catalyzes the decarboxylation of four acetate groups of uroporphyrinogen-III to yield coproporphyrinogen-III. The polypeptide is Uroporphyrinogen decarboxylase (Tolumonas auensis (strain DSM 9187 / NBRC 110442 / TA 4)).